The chain runs to 366 residues: tRNA(Met) cytidine acetate ligase (366 aa).

Residues 7-20 (VAEFNPFHYGHKYL), G96, N152, and R175 contribute to the ATP site.

The protein belongs to the TmcAL family.

Its subcellular location is the cytoplasm. The enzyme catalyses cytidine(34) in elongator tRNA(Met) + acetate + ATP = N(4)-acetylcytidine(34) in elongator tRNA(Met) + AMP + diphosphate. Functionally, catalyzes the formation of N(4)-acetylcytidine (ac(4)C) at the wobble position of elongator tRNA(Met), using acetate and ATP as substrates. First activates an acetate ion to form acetyladenylate (Ac-AMP) and then transfers the acetyl group to tRNA to form ac(4)C34. The chain is tRNA(Met) cytidine acetate ligase from Streptococcus uberis (strain ATCC BAA-854 / 0140J).